The sequence spans 367 residues: Methylthioribose-1-phosphate isomerase (367 aa).

Asp250 acts as the Proton donor in catalysis.

It belongs to the eIF-2B alpha/beta/delta subunits family. MtnA subfamily.

It localises to the cytoplasm. The protein resides in the nucleus. The enzyme catalyses 5-(methylsulfanyl)-alpha-D-ribose 1-phosphate = 5-(methylsulfanyl)-D-ribulose 1-phosphate. It participates in amino-acid biosynthesis; L-methionine biosynthesis via salvage pathway; L-methionine from S-methyl-5-thio-alpha-D-ribose 1-phosphate: step 1/6. Functionally, catalyzes the interconversion of methylthioribose-1-phosphate (MTR-1-P) into methylthioribulose-1-phosphate (MTRu-1-P). This is Methylthioribose-1-phosphate isomerase (IDI2) from Zea mays (Maize).